A 557-amino-acid polypeptide reads, in one-letter code: TBCC domain-containing protein 1 (557 aa).

The 146-residue stretch at 290–435 (TTKRAKIACN…LEDHMARTGL (146 aa)) folds into the C-CAP/cofactor C-like domain.

This sequence belongs to the TBCC family.

The protein localises to the cytoplasm. The protein resides in the cytoskeleton. It localises to the microtubule organizing center. Its subcellular location is the centrosome. It is found in the spindle pole. Its function is as follows. Plays a role in the regulation of centrosome and Golgi apparatus positioning, with consequences on cell shape and cell migration. The polypeptide is TBCC domain-containing protein 1 (TBCCD1) (Homo sapiens (Human)).